We begin with the raw amino-acid sequence, 250 residues long: MGNLRVDVITLFPEMFSAITEYGITSRAVKQGLLQVTCWNPRDYTTDRHHTVDDRPFGGGPGMVMKIKPLEDALVSARQATGASAKVIYLSPQGRKLTQQAVKGLAEQESLILIAGRYEGIDERFIEAHVDEEWSIGDYVLSGGELPAMVLIDAVTRLLPGALGHVDSAEEDSFTDGLLDCPHYTRPEVYADQRVPDVLLSGNHAHIRRWRMKQSLGRTFERRADLLESRSLSGEEKKLLEEYLRERDDS.

S-adenosyl-L-methionine-binding positions include glycine 116 and 136 to 141; that span reads IGDYVL.

Belongs to the RNA methyltransferase TrmD family. As to quaternary structure, homodimer.

The protein localises to the cytoplasm. It carries out the reaction guanosine(37) in tRNA + S-adenosyl-L-methionine = N(1)-methylguanosine(37) in tRNA + S-adenosyl-L-homocysteine + H(+). Functionally, specifically methylates guanosine-37 in various tRNAs. The polypeptide is tRNA (guanine-N(1)-)-methyltransferase (Pseudomonas putida (strain W619)).